Consider the following 239-residue polypeptide: Sensory rhodopsin-1 (239 aa).

Residues 1–3 (MDA) lie on the Extracellular side of the membrane. Residues 4-25 (VATAYLGGAVALIVGVAFVWLL) form a helical membrane-spanning segment. Residues 26–34 (YRSLDGSPH) lie on the Cytoplasmic side of the membrane. The helical transmembrane segment at 35–56 (QSALAPLAIIPVFAGLSYVGMA) threads the bilayer. The Extracellular portion of the chain corresponds to 57 to 70 (YDIGTVIVNGNQIV). Residues 71–92 (GLRYIDWLVTTPILVGYVGYAA) form a helical membrane-spanning segment. Topologically, residues 93-95 (GAS) are cytoplasmic. A helical membrane pass occupies residues 96–118 (RRSIIGVMVADALMIAVGAGAVV). Residues 119–122 (TDGT) are Extracellular-facing. A helical membrane pass occupies residues 123-150 (LKWALFGVSSIFHLSLFAYLYVIFPRVV). The Cytoplasmic segment spans residues 151-153 (PDV). A helical transmembrane segment spans residues 154-181 (PEQIGLFNLLKNHIGLLWLAYPLVWLFG). Residues 182–189 (PAGIGEAT) lie on the Extracellular side of the membrane. Residues 190–222 (AAGVALTYVFLDVLAKVPYVYFFYARRRVFMHS) form a helical membrane-spanning segment. Lys205 carries the N6-(retinylidene)lysine modification. Residues 223–239 (ESPPAPEQATVEATAAD) are Cytoplasmic-facing.

It belongs to the archaeal/bacterial/fungal opsin family. In terms of assembly, interacts with HTR-I.

It localises to the cell membrane. Its function is as follows. Involved in the control of phototaxis. Mediates both photoattractant (in the orange light) and photophobic (in the near UV light) responses. The signal is then transmitted to the sensory rhodopsin I transducer (HTR-I). The protein is Sensory rhodopsin-1 (sopI) of Halobacterium salinarum (strain ATCC 29341 / DSM 671 / R1).